The sequence spans 392 residues: Formate-dependent phosphoribosylglycinamide formyltransferase (392 aa).

N(1)-(5-phospho-beta-D-ribosyl)glycinamide contacts are provided by residues 20-21 (EL) and Glu80. ATP contacts are provided by residues Arg112, Lys153, 158–163 (SSGKGQ), 193–196 (EGFI), and Glu201. The 190-residue stretch at 117 to 306 (RLAAETLALP…EFALHVRAIL (190 aa)) folds into the ATP-grasp domain. Glu265 and Glu277 together coordinate Mg(2+). N(1)-(5-phospho-beta-D-ribosyl)glycinamide contacts are provided by residues Asp284, Lys354, and 361-362 (RR).

Belongs to the PurK/PurT family. As to quaternary structure, homodimer.

It carries out the reaction N(1)-(5-phospho-beta-D-ribosyl)glycinamide + formate + ATP = N(2)-formyl-N(1)-(5-phospho-beta-D-ribosyl)glycinamide + ADP + phosphate + H(+). It participates in purine metabolism; IMP biosynthesis via de novo pathway; N(2)-formyl-N(1)-(5-phospho-D-ribosyl)glycinamide from N(1)-(5-phospho-D-ribosyl)glycinamide (formate route): step 1/1. Involved in the de novo purine biosynthesis. Catalyzes the transfer of formate to 5-phospho-ribosyl-glycinamide (GAR), producing 5-phospho-ribosyl-N-formylglycinamide (FGAR). Formate is provided by PurU via hydrolysis of 10-formyl-tetrahydrofolate. The polypeptide is Formate-dependent phosphoribosylglycinamide formyltransferase (Shewanella amazonensis (strain ATCC BAA-1098 / SB2B)).